The primary structure comprises 216 residues: MVCVLTLAASAGGLAVLLIVRLWAVLRSHPVTPRQSLGLLIVAGSGGHTAEILRLVGSLSGAYSPRHYVIAESDEMSAKKIHSLELARAQNDSTTEHTEYYLHRIPRSREVRQSWLSSVFTTLYSIWFSFPLVHRIKPDLVLCNGPGTCVPICVSALLLGILGIKKVIIVYVESICRVETLSLSGKILWHLSDYFIVQWPTLKEKYPKSVYLGRIV.

Topologically, residues 1-3 are lumenal; it reads MVC. The helical transmembrane segment at 4–24 threads the bilayer; the sequence is VLTLAASAGGLAVLLIVRLWA. Residues 25–216 are Cytoplasmic-facing; that stretch reads VLRSHPVTPR…PKSVYLGRIV (192 aa).

It belongs to the ALG14 family. As to quaternary structure, forms with ALG13 the active heterodimeric UDP-N-acetylglucosamine transferase complex.

The protein localises to the endoplasmic reticulum membrane. Functionally, part of the UDP-N-acetylglucosamine transferase complex that operates in the biosynthetic pathway of dolichol-linked oligosaccharides, the glycan precursors employed in protein asparagine (N)-glycosylation. The assembly of dolichol-linked oligosaccharides begins on the cytosolic side of the endoplasmic reticulum membrane and finishes in its lumen. The sequential addition of sugars to dolichol pyrophosphate produces dolichol-linked oligosaccharides containing fourteen sugars, including two GlcNAcs, nine mannoses and three glucoses. Once assembled, the oligosaccharides are transferred from the lipid to nascent proteins by oligosaccharyltransferases. Functions as a protein-membrane adapter recruiting ALG13 at the cytoplasmic face of the endoplasmic reticulum, where the complex catalyzes the second step of dolichol pyrophosphate biosynthesis, transferring a beta1,4-linked N-acetylglucosamine (GlcNAc) from UDP-GlcNAc to GlcNAc-pyrophosphatedolichol (Gn-PDol) to produce N,N'-diacetylchitobiosyl diphosphodolichol. N,N'-diacetylchitobiosyl diphosphodolichol is a substrate for ALG1, the following enzyme in the biosynthetic pathway. This chain is UDP-N-acetylglucosamine transferase subunit ALG14, found in Rattus norvegicus (Rat).